The primary structure comprises 320 residues: Putative malonate transporter (320 aa).

8 helical membrane-spanning segments follow: residues 1 to 21, 32 to 52, 65 to 85, 113 to 133, 167 to 187, 196 to 216, 256 to 276, and 289 to 309; these read MAEI…GYLT, MGWL…FKLV, FILT…AIGL, GLAL…IFCF, IAFH…FLSF, LIDY…GVTL, IWVQ…VFVI, and ATIL…LYLI.

Belongs to the auxin efflux carrier (TC 2.A.69) family.

It localises to the cell membrane. The polypeptide is Putative malonate transporter (mdcF) (Rhizobium meliloti (strain 1021) (Ensifer meliloti)).